We begin with the raw amino-acid sequence, 153 residues long: UPF0260 protein YcgN (153 aa).

The protein belongs to the UPF0260 family.

The protein is UPF0260 protein YcgN of Salmonella agona (strain SL483).